The chain runs to 566 residues: Urease subunit alpha (566 aa).

In terms of domain architecture, Urease spans 128 to 566; the sequence is GGIDSHVHFI…LPMAQRYFLF (439 aa). Ni(2+) is bound by residues H133, H135, and K216. The residue at position 216 (K216) is an N6-carboxylysine. Position 218 (H218) interacts with substrate. H245 and H271 together coordinate Ni(2+). H319 acts as the Proton donor in catalysis. D359 contributes to the Ni(2+) binding site.

It belongs to the metallo-dependent hydrolases superfamily. Urease alpha subunit family. Heterotrimer of UreA (gamma), UreB (beta) and UreC (alpha) subunits. Three heterotrimers associate to form the active enzyme. It depends on Ni cation as a cofactor. Carboxylation allows a single lysine to coordinate two nickel ions.

Its subcellular location is the cytoplasm. The enzyme catalyses urea + 2 H2O + H(+) = hydrogencarbonate + 2 NH4(+). It participates in nitrogen metabolism; urea degradation; CO(2) and NH(3) from urea (urease route): step 1/1. This is Urease subunit alpha from Nitrosococcus oceani (strain ATCC 19707 / BCRC 17464 / JCM 30415 / NCIMB 11848 / C-107).